Consider the following 377-residue polypeptide: Succinyl-diaminopimelate desuccinylase (377 aa).

H67 contacts Zn(2+). D69 is a catalytic residue. Position 100 (D100) interacts with Zn(2+). E134 serves as the catalytic Proton acceptor. 3 residues coordinate Zn(2+): E135, E163, and H349.

This sequence belongs to the peptidase M20A family. DapE subfamily. In terms of assembly, homodimer. The cofactor is Zn(2+). Co(2+) serves as cofactor.

The enzyme catalyses N-succinyl-(2S,6S)-2,6-diaminopimelate + H2O = (2S,6S)-2,6-diaminopimelate + succinate. It functions in the pathway amino-acid biosynthesis; L-lysine biosynthesis via DAP pathway; LL-2,6-diaminopimelate from (S)-tetrahydrodipicolinate (succinylase route): step 3/3. Its function is as follows. Catalyzes the hydrolysis of N-succinyl-L,L-diaminopimelic acid (SDAP), forming succinate and LL-2,6-diaminopimelate (DAP), an intermediate involved in the bacterial biosynthesis of lysine and meso-diaminopimelic acid, an essential component of bacterial cell walls. This Haemophilus influenzae (strain 86-028NP) protein is Succinyl-diaminopimelate desuccinylase.